Reading from the N-terminus, the 87-residue chain is Small ribosomal subunit protein eS21 (87 aa).

Belongs to the eukaryotic ribosomal protein eS21 family. As to quaternary structure, component of the small ribosomal subunit. Mature ribosomes consist of a small (40S) and a large (60S) subunit. The 40S subunit contains about 33 different proteins and 1 molecule of RNA (18S). The 60S subunit contains about 49 different proteins and 3 molecules of RNA (25S, 5.8S and 5S).

The protein resides in the cytoplasm. Required for the processing of the 20S rRNA-precursor to mature 18S rRNA in a late step of the maturation of 40S ribosomal subunits. Has a physiological role leading to 18S rRNA stability. The chain is Small ribosomal subunit protein eS21 (RPS21) from Eremothecium gossypii (strain ATCC 10895 / CBS 109.51 / FGSC 9923 / NRRL Y-1056) (Yeast).